The primary structure comprises 128 residues: Arginine decarboxylase proenzyme (128 aa).

Ser76 functions as the Schiff-base intermediate with substrate; via pyruvic acid in the catalytic mechanism. Position 76 is a pyruvic acid (Ser); by autocatalysis (Ser76). The active-site Proton acceptor; for processing activity is the His81. Cys96 acts as the Proton donor; for catalytic activity in catalysis.

The protein belongs to the prokaryotic AdoMetDC family. Type 1 subfamily. In terms of assembly, heterooctamer of four alpha and four beta chains arranged as a tetramer of alpha/beta heterodimers. The cofactor is pyruvate. In terms of processing, is synthesized initially as an inactive proenzyme. Formation of the active enzyme involves a self-maturation process in which the active site pyruvoyl group is generated from an internal serine residue via an autocatalytic post-translational modification. Two non-identical subunits are generated from the proenzyme in this reaction, and the pyruvate is formed at the N-terminus of the alpha chain, which is derived from the carboxyl end of the proenzyme. The post-translation cleavage follows an unusual pathway, termed non-hydrolytic serinolysis, in which the side chain hydroxyl group of the serine supplies its oxygen atom to form the C-terminus of the beta chain, while the remainder of the serine residue undergoes an oxidative deamination to produce ammonia and the pyruvoyl group blocking the N-terminus of the alpha chain.

The catalysed reaction is L-arginine + H(+) = agmatine + CO2. It participates in amine and polyamine biosynthesis; agmatine biosynthesis; agmatine from L-arginine: step 1/1. Its function is as follows. Specifically catalyzes the decarboxylation of L-arginine to agmatine. Has no S-adenosylmethionine decarboxylase (AdoMetDC) activity. The sequence is that of Arginine decarboxylase proenzyme from Sulfurisphaera tokodaii (strain DSM 16993 / JCM 10545 / NBRC 100140 / 7) (Sulfolobus tokodaii).